The primary structure comprises 857 residues: DNA gyrase subunit A (857 aa).

A Topo IIA-type catalytic domain is found at 39–507 (LPDVRDGLKP…YEGDMSIEDL (469 aa)). Tyr-127 serves as the catalytic O-(5'-phospho-DNA)-tyrosine intermediate. The GyrA-box motif lies at 534 to 540 (QKRGGKG). The disordered stretch occupies residues 825-857 (REAEEVDGDVAVDETAEGAATTGTDEGEAPSAE). Acidic residues predominate over residues 828-840 (EEVDGDVAVDETA).

This sequence belongs to the type II topoisomerase GyrA/ParC subunit family. Heterotetramer, composed of two GyrA and two GyrB chains. In the heterotetramer, GyrA contains the active site tyrosine that forms a transient covalent intermediate with DNA, while GyrB binds cofactors and catalyzes ATP hydrolysis.

It is found in the cytoplasm. It carries out the reaction ATP-dependent breakage, passage and rejoining of double-stranded DNA.. A type II topoisomerase that negatively supercoils closed circular double-stranded (ds) DNA in an ATP-dependent manner to modulate DNA topology and maintain chromosomes in an underwound state. Negative supercoiling favors strand separation, and DNA replication, transcription, recombination and repair, all of which involve strand separation. Also able to catalyze the interconversion of other topological isomers of dsDNA rings, including catenanes and knotted rings. Type II topoisomerases break and join 2 DNA strands simultaneously in an ATP-dependent manner. In Streptomyces coelicolor (strain ATCC BAA-471 / A3(2) / M145), this protein is DNA gyrase subunit A.